A 598-amino-acid polypeptide reads, in one-letter code: Elongation factor 4 (598 aa).

Positions 5–187 constitute a tr-type G domain; the sequence is SHIRNFSIIA…RLVATIPAPT (183 aa). Residues 17–22 and 134–137 each bind GTP; these read DHGKST and NKMD.

The protein belongs to the TRAFAC class translation factor GTPase superfamily. Classic translation factor GTPase family. LepA subfamily.

The protein resides in the cell inner membrane. The catalysed reaction is GTP + H2O = GDP + phosphate + H(+). In terms of biological role, required for accurate and efficient protein synthesis under certain stress conditions. May act as a fidelity factor of the translation reaction, by catalyzing a one-codon backward translocation of tRNAs on improperly translocated ribosomes. Back-translocation proceeds from a post-translocation (POST) complex to a pre-translocation (PRE) complex, thus giving elongation factor G a second chance to translocate the tRNAs correctly. Binds to ribosomes in a GTP-dependent manner. This chain is Elongation factor 4, found in Pseudomonas syringae pv. syringae (strain B728a).